Here is a 313-residue protein sequence, read N- to C-terminus: Ribosomal protein L11 methyltransferase (313 aa).

S-adenosyl-L-methionine-binding residues include threonine 164, glycine 185, aspartate 207, and asparagine 249.

Belongs to the methyltransferase superfamily. PrmA family.

The protein resides in the cytoplasm. The catalysed reaction is L-lysyl-[protein] + 3 S-adenosyl-L-methionine = N(6),N(6),N(6)-trimethyl-L-lysyl-[protein] + 3 S-adenosyl-L-homocysteine + 3 H(+). Functionally, methylates ribosomal protein L11. The polypeptide is Ribosomal protein L11 methyltransferase (Clostridium perfringens (strain 13 / Type A)).